Consider the following 372-residue polypeptide: UDP-N-acetylglucosamine--N-acetylmuramyl-(pentapeptide) pyrophosphoryl-undecaprenol N-acetylglucosamine transferase (372 aa).

UDP-N-acetyl-alpha-D-glucosamine is bound by residues Thr-10–Gly-12, Asn-124, Arg-166, Ser-196, Ile-256, and Gln-301.

Belongs to the glycosyltransferase 28 family. MurG subfamily.

It is found in the cell membrane. It carries out the reaction di-trans,octa-cis-undecaprenyl diphospho-N-acetyl-alpha-D-muramoyl-L-alanyl-D-glutamyl-meso-2,6-diaminopimeloyl-D-alanyl-D-alanine + UDP-N-acetyl-alpha-D-glucosamine = di-trans,octa-cis-undecaprenyl diphospho-[N-acetyl-alpha-D-glucosaminyl-(1-&gt;4)]-N-acetyl-alpha-D-muramoyl-L-alanyl-D-glutamyl-meso-2,6-diaminopimeloyl-D-alanyl-D-alanine + UDP + H(+). Its pathway is cell wall biogenesis; peptidoglycan biosynthesis. In terms of biological role, cell wall formation. Catalyzes the transfer of a GlcNAc subunit on undecaprenyl-pyrophosphoryl-MurNAc-pentapeptide (lipid intermediate I) to form undecaprenyl-pyrophosphoryl-MurNAc-(pentapeptide)GlcNAc (lipid intermediate II). The sequence is that of UDP-N-acetylglucosamine--N-acetylmuramyl-(pentapeptide) pyrophosphoryl-undecaprenol N-acetylglucosamine transferase from Desulforamulus reducens (strain ATCC BAA-1160 / DSM 100696 / MI-1) (Desulfotomaculum reducens).